The primary structure comprises 170 residues: Myosin regulatory light chain 2, skeletal muscle isoform (170 aa).

At Ala-2 the chain carries N,N,N-trimethylalanine. 2 positions are modified to phosphoserine: Ser-16 and Ser-17. 2 positions are modified to phosphothreonine: Thr-26 and Thr-36. Positions 26-61 constitute an EF-hand 1 domain; it reads TQIQEFKEAFTVIDQNRDGIIDKEDLRDTFAAMGRL. Ca(2+) is bound by residues Asp-39, Asn-41, Asp-43, and Asp-50. Ser-76 is modified (phosphoserine). EF-hand domains follow at residues 96–131 and 132–167; these read DPEDVITGAFKVLDPEGKGTIKKKFLEELLTTQCDR and FSQEEIKNMWAAFPPDVGGNVDYKNICYVITHGDAK. Thr-102 carries the phosphothreonine modification.

In terms of assembly, myosin is a hexamer of 2 heavy chains and 4 light chains.

Plays a role in muscle contraction. This chain is Myosin regulatory light chain 2, skeletal muscle isoform, found in Bos taurus (Bovine).